We begin with the raw amino-acid sequence, 75 residues long: UPF0181 protein ETA_15280 (75 aa).

This sequence belongs to the UPF0181 family.

This is UPF0181 protein ETA_15280 from Erwinia tasmaniensis (strain DSM 17950 / CFBP 7177 / CIP 109463 / NCPPB 4357 / Et1/99).